A 430-amino-acid chain; its full sequence is Transcription factor PIF4 (430 aa).

5 disordered regions span residues 42-71 (QTHR…DQET), 97-136 (MDPL…VMPP), 160-183 (TVGP…SHDR), 223-266 (DRKR…NLSE), and 405-430 (SSPA…RLDH). The segment covering 43 to 60 (THREQTQTQKQDHHEEAL) has biased composition (basic and acidic residues). The segment covering 61-71 (RSSTFLEDQET) has biased composition (polar residues). The span at 126–136 (CPDPPPQVMPP) shows a compositional bias: pro residues. A compositionally biased stretch (polar residues) spans 160–175 (TVGPSHCGSNPSQNDL). Positions 244-253 (NKSNQRSGSN) are enriched in low complexity. The span at 257 to 266 (RAAEVHNLSE) shows a compositional bias: basic and acidic residues. One can recognise a bHLH domain in the interval 257-306 (RAAEVHNLSERRRRDRINERMKALQELIPHCSKTDKASILDEAIDYLKSL). The span at 405-419 (SSPAGQQSQQPSSVP) shows a compositional bias: low complexity.

Belongs to the bHLH protein family. In terms of assembly, interacts preferentially with the Pfr form of phytochrome B (phyB). Binds DNA as a homodimer, but once bound to DNA, loses its capacity to interact with phyB. Interacts with APRR1/TOC1 and PIF3. Binds to RGL2 and RGA. Forms non-functional heterodimer with HFR1. Interacts with PHYB, CRY1 and CRY2 in the nucleus in response to low blue light (LBL). Interacts with FYPP1 and FYPP3. Associates to PTAC12/HMR/PAP5, which acts as a transcriptional coactivator to trigger the thermoresponsive growth-relevant genes and promote warm-temperature-dependent PIF4 accumulation. Interacts with MED14. As to expression, mainly expressed in leaves, stems and seedlings, and, to a lower extent, in fruits, flowers and roots.

The protein localises to the nucleus. Functionally, transcription factor acting negatively in the phytochrome B signaling pathway. May regulate the expression of a subset of genes involved in cell expansion by binding to the G-box motif. Activated by CRY1 and CRY2 in response to low blue light (LBL) by direct binding at chromatin on E-box variant 5'-CA[CT]GTG-3' to stimulate specific gene expression to adapt global physiology (e.g. hypocotyl elongation in low blue light). Element of a PIF4/HMR/MED14-dependent thermoresponsive process; collaboratively with its transcriptional coactivator PTAC12/HMR/PAP5, involved in the regulation of thermoresponsive growth-relevant genes (e.g. mainly involved in biosynthesis and signaling of the phytohormone auxin) leading to daytime warm temperature elicitation of MED14-dependent thermomorphogenesis (e.g. hypocotyl elongation). The polypeptide is Transcription factor PIF4 (Arabidopsis thaliana (Mouse-ear cress)).